A 908-amino-acid polypeptide reads, in one-letter code: Translation initiation factor IF-2 (908 aa).

Disordered regions lie at residues 123–154 and 212–278; these read EEPPILQPELPTEEKEELEVIESPQAPQEELK and KKEP…VSEK. The tr-type G domain occupies 407 to 577; sequence ERAPIVTIMG…LFEAELLELK (171 aa). Residues 416–423 form a G1 region; sequence GHVDHGKT. 416–423 is a GTP binding site; the sequence is GHVDHGKT. The interval 441–445 is G2; that stretch reads GITQH. The interval 463 to 466 is G3; the sequence is DTPG. GTP-binding positions include 463 to 467 and 517 to 520; these read DTPGH and NKMD. Positions 517 to 520 are G4; sequence NKMD. The segment at 553–555 is G5; it reads SAI.

This sequence belongs to the TRAFAC class translation factor GTPase superfamily. Classic translation factor GTPase family. IF-2 subfamily.

Its subcellular location is the cytoplasm. In terms of biological role, one of the essential components for the initiation of protein synthesis. Protects formylmethionyl-tRNA from spontaneous hydrolysis and promotes its binding to the 30S ribosomal subunits. Also involved in the hydrolysis of GTP during the formation of the 70S ribosomal complex. This Amoebophilus asiaticus (strain 5a2) protein is Translation initiation factor IF-2.